The primary structure comprises 1433 residues: CAP-Gly domain-containing linker protein 1 (1433 aa).

Residues 1-51 (MSMLKPSGLKAPSKTIKHGSTLLKAPASVATAPAEKAPSSEKSSSTTTADA) are disordered. Positions 32–49 (APAEKAPSSEKSSSTTTA) are enriched in low complexity. The CAP-Gly 1 domain maps to 79 to 121 (GETQFAPGQWAGIVLDEPIGKNDGSVAGVRYFQCEPLRGIFTR). The interval 133 to 208 (DEANGTQTAH…VSNLSEAGSL (76 aa)) is disordered. Low complexity predominate over residues 140 to 168 (TAHASRATSPTSTSTASAVSASPAALLPS). Residues 184 to 204 (TPSQFSNLSKTASGSVSNLSE) show a composition bias toward polar residues. Positions 235 to 277 (GETDFAKGEWCGVELDEPLGKNDGAVAGTRYFQCQPRYGLFAP) constitute a CAP-Gly 2 domain. Residues 319 to 333 (SLSSVASSVSSKPSR) are compositionally biased toward low complexity. Residues 319-338 (SLSSVASSVSSKPSRTGLLT) are disordered. Positions 351–1353 (TTALQEALKE…CEAALNGNEE (1003 aa)) form a coiled coil. Residues 1412-1429 (PYCDTCEMFGHWTADCND) form a CCHC-type zinc finger.

The protein resides in the cytoplasm. Its subcellular location is the cytoskeleton. It is found in the cytoplasmic vesicle membrane. The protein localises to the cell projection. It localises to the ruffle. Functionally, binds to the plus end of microtubules and regulates the dynamics of the microtubule cytoskeleton. Promotes microtubule growth and microtubule bundling. Links cytoplasmic vesicles to microtubules and thereby plays an important role in intracellular vesicle trafficking. Plays a role macropinocytosis and endosome trafficking. This chain is CAP-Gly domain-containing linker protein 1 (CLIP1), found in Gallus gallus (Chicken).